Consider the following 239-residue polypeptide: Mannose-binding protein A (239 aa).

The signal sequence occupies residues 1 to 18 (MLLLPLLPVLLCVVSVSS). Positions 35–88 (ACGRDGRDGPKGEKGEPGQGLRGLQGPPGKLGPPGSVGSPGSPGPKGQKGDHGD) are disordered. The Collagen-like domain occupies 37-89 (GRDGRDGPKGEKGEPGQGLRGLQGPPGKLGPPGSVGSPGSPGPKGQKGDHGDN). Positions 38–50 (RDGRDGPKGEKGE) are enriched in basic and acidic residues. The residue at position 44 (proline 44) is a 4-hydroxyproline. 5-hydroxylysine occurs at positions 45 and 48. Lysine 45 and lysine 48 each carry an O-linked (Gal...) hydroxylysine glycan. 4-hydroxyproline occurs at positions 51, 62, 68, 74, and 79. The segment covering 58–74 (LQGPPGKLGPPGSVGSP) has biased composition (low complexity). A 5-hydroxylysine mark is found at lysine 80 and lysine 83. O-linked (Gal...) hydroxylysine glycosylation is found at lysine 80 and lysine 83. Residues 144-239 (SLCTELQGTV…SFKAVCEFPA (96 aa)) enclose the C-type lectin domain. Cystine bridges form between cysteine 146–cysteine 235 and cysteine 213–cysteine 227. 8 residues coordinate Ca(2+): aspartate 179, glutamate 183, glutamate 203, asparagine 205, glutamate 211, aspartate 212, asparagine 223, and aspartate 224. The tract at residues 203–211 (EPNNHGSGE) is calcium-dependent carbohydrate binding.

As to quaternary structure, homotrimer. Forms higher oligomeric complexes formed by the association of two, three or more homotrimers. Oligomerization occurs in the endoplasmic reticulum. Interacts with MASP1 and MASP2. Hydroxylated on lysine and proline residues within the collagen-like domain. In terms of processing, O-glycosylated. O-linked glycans on hydroxylysine residues consist of Glc-Gal disaccharides bound to the oxygen atom of post-translationally added hydroxyl groups. Detected in liver and blood serum (at protein level). Detected in liver.

The protein localises to the secreted. Its function is as follows. Calcium-dependent lectin. Plays a role in the innate immune response by binding mannose, fucose and N-acetylglucosamine moieties on different microorganisms and mediating activation of the lectin complement pathway. Binds to late apoptotic cells, as well as to apoptotic blebs and to necrotic cells, but not to early apoptotic cells, facilitating their uptake by macrophages. The protein is Mannose-binding protein A (Mbl1) of Mus musculus (Mouse).